We begin with the raw amino-acid sequence, 1050 residues long: DNA-directed RNA polymerase subunit beta (1050 aa).

The protein belongs to the RNA polymerase beta chain family. As to quaternary structure, in plastids the minimal PEP RNA polymerase catalytic core is composed of four subunits: alpha, beta, beta', and beta''. When a (nuclear-encoded) sigma factor is associated with the core the holoenzyme is formed, which can initiate transcription (Potential).

Its subcellular location is the plastid. It is found in the apicoplast. It catalyses the reaction RNA(n) + a ribonucleoside 5'-triphosphate = RNA(n+1) + diphosphate. In terms of biological role, DNA-dependent RNA polymerase catalyzes the transcription of DNA into RNA using the four ribonucleoside triphosphates as substrates. The sequence is that of DNA-directed RNA polymerase subunit beta (rpoB) from Neospora caninum (Coccidian parasite).